The chain runs to 353 residues: Heterogeneous nuclear ribonucleoproteins A2/B1 (353 aa).

Met1 is modified (N-acetylmethionine). Thr4 is modified (phosphothreonine). Residue Leu5 forms a Glycyl lysine isopeptide (Lys-Gly) (interchain with G-Cter in SUMO2) linkage. Residues 9-15 (PLERKKR) carry the Nuclear localization signal motif. 2 RRM domains span residues 21–104 (RKLF…ESGK) and 112–191 (KKLF…LSRQ). Lys22 is covalently cross-linked (Glycyl lysine isopeptide (Lys-Gly) (interchain with G-Cter in SUMO2)). Ser29 is subject to Phosphoserine. Arg38 carries the post-translational modification Omega-N-methylarginine. Ser85 is modified (phosphoserine). At Lys104 the chain carries N6,N6-dimethyllysine; alternate. Lys104 is covalently cross-linked (Glycyl lysine isopeptide (Lys-Gly) (interchain with G-Cter in SUMO2); alternate). Residues Lys112, Lys120, and Lys137 each participate in a glycyl lysine isopeptide (Lys-Gly) (interchain with G-Cter in SUMO2) cross-link. Position 140 is a phosphothreonine (Thr140). Ser149 is modified (phosphoserine). Lys152 is covalently cross-linked (Glycyl lysine isopeptide (Lys-Gly) (interchain with G-Cter in SUMO2)). Thr159 carries the post-translational modification Phosphothreonine. Glycyl lysine isopeptide (Lys-Gly) (interchain with G-Cter in SUMO2); alternate cross-links involve residues Lys168 and Lys173. N6-acetyllysine; alternate is present on residues Lys168 and Lys173. Phosphothreonine is present on Thr176. Lys186 is covalently cross-linked (Glycyl lysine isopeptide (Lys-Gly) (interchain with G-Cter in SUMO2)). Ser189 and Ser201 each carry phosphoserine. Positions 193–353 (MQEVQSSRSG…SGGYGGRSRY (161 aa)) are disordered. The segment covering 202–223 (GRGGNFGFGDSRGGGGNFGPGP) has biased composition (gly residues). At Arg203 the chain carries Asymmetric dimethylarginine; alternate. Arg203 carries the post-translational modification Dimethylated arginine; alternate. Arg203 bears the Omega-N-methylarginine; alternate mark. Ser212 carries the post-translational modification Phosphoserine. An Asymmetric dimethylarginine; alternate modification is found at Arg213. Arg213 is modified (dimethylated arginine; alternate). Arg213 carries the post-translational modification Omega-N-methylarginine; alternate. Phosphoserine is present on Ser225. Residue Arg228 is modified to Omega-N-methylarginine. Phosphoserine occurs at positions 231 and 236. The residue at position 238 (Arg238) is an Omega-N-methylarginine. Ser259 is modified (phosphoserine). Asymmetric dimethylarginine; alternate is present on Arg266. The residue at position 266 (Arg266) is an Omega-N-methylarginine; alternate. The segment at 308 to 347 (QQPSNYGPMKSGNFGGSRNMGGPYGGGNYGPGGSGGSGGY) is nuclear targeting sequence. A compositionally biased stretch (gly residues) spans 320-353 (NFGGSRNMGGPYGGGNYGPGGSGGSGGYGGRSRY). Ser324 is subject to Phosphoserine. At Arg325 the chain carries Omega-N-methylarginine. Tyr331 is subject to Phosphotyrosine. Phosphoserine is present on residues Ser341 and Ser344. At Tyr347 the chain carries Phosphotyrosine. Position 350 is an omega-N-methylarginine (Arg350).

In terms of assembly, homodimer; dimerization is required for nucleocytoplasmic translocation. Identified in the spliceosome C complex. Identified in a IGF2BP1-dependent mRNP granule complex containing untranslated mRNAs. Interacts with IGF2BP1. Interacts with C9orf72. Interacts with DGCR8. Interacts with TARDBP. Interacts with CKAP5. Interacts with TBK1. Interacts with STING1. Interacts with SRC. Interacts with PPIA/CYPA. Interacts (via C-terminus) with FAM76B; the interaction results in retention of HNRNPA2B1 in the nucleus and inhibition of the NF-kappa-B-mediated inflammatory pathway. Interacts with NF-kappa-B inhibitors NFKBIA and NFKBIE; the interaction may be mediated by the RRM2 domain of HNRNPA2B1, and HNRNPA2B1 may interact simultaneously with FAM76B and either NFKBIA or NFKBIE to form a complex. In terms of processing, sumoylated in exosomes, promoting miRNAs-binding. Asymmetric dimethylation at Arg-266 constitutes the major methylation site. According to a report, methylation affects subcellular location and promotes nuclear localization. According to another report, methylation at Arg-266 does not influence nucleocytoplasmic shuttling.

It localises to the nucleus. Its subcellular location is the nucleoplasm. The protein localises to the cytoplasm. The protein resides in the cytoplasmic granule. It is found in the secreted. It localises to the extracellular exosome. Its function is as follows. Heterogeneous nuclear ribonucleoprotein (hnRNP) that associates with nascent pre-mRNAs, packaging them into hnRNP particles. The hnRNP particle arrangement on nascent hnRNA is non-random and sequence-dependent and serves to condense and stabilize the transcripts and minimize tangling and knotting. Packaging plays a role in various processes such as transcription, pre-mRNA processing, RNA nuclear export, subcellular location, mRNA translation and stability of mature mRNAs. Forms hnRNP particles with at least 20 other different hnRNP and heterogeneous nuclear RNA in the nucleus. Involved in transport of specific mRNAs to the cytoplasm in oligodendrocytes and neurons: acts by specifically recognizing and binding the A2RE (21 nucleotide hnRNP A2 response element) or the A2RE11 (derivative 11 nucleotide oligonucleotide) sequence motifs present on some mRNAs, and promotes their transport to the cytoplasm. Specifically binds single-stranded telomeric DNA sequences, protecting telomeric DNA repeat against endonuclease digestion. Also binds other RNA molecules, such as primary miRNA (pri-miRNAs): acts as a nuclear 'reader' of the N6-methyladenosine (m6A) mark by specifically recognizing and binding a subset of nuclear m6A-containing pri-miRNAs. Binding to m6A-containing pri-miRNAs promotes pri-miRNA processing by enhancing binding of DGCR8 to pri-miRNA transcripts. Involved in miRNA sorting into exosomes following sumoylation, possibly by binding (m6A)-containing pre-miRNAs. Acts as a regulator of efficiency of mRNA splicing, possibly by binding to m6A-containing pre-mRNAs. Plays a role in the splicing of pyruvate kinase PKM by binding repressively to sequences flanking PKM exon 9, inhibiting exon 9 inclusion and resulting in exon 10 inclusion and production of the PKM M2 isoform. Also plays a role in the activation of the innate immune response. Mechanistically, senses the presence of viral DNA in the nucleus, homodimerizes and is demethylated by JMJD6. In turn, translocates to the cytoplasm where it activates the TBK1-IRF3 pathway, leading to interferon alpha/beta production. In terms of biological role, (Microbial infection) Involved in the transport of HIV-1 genomic RNA out of the nucleus, to the microtubule organizing center (MTOC), and then from the MTOC to the cytoplasm: acts by specifically recognizing and binding the A2RE (21 nucleotide hnRNP A2 response element) sequence motifs present on HIV-1 genomic RNA, and promotes its transport. The polypeptide is Heterogeneous nuclear ribonucleoproteins A2/B1 (HNRNPA2B1) (Homo sapiens (Human)).